We begin with the raw amino-acid sequence, 500 residues long: MIPVVALVGRPNVGKSTLFNRLTRTRDALVADFPGLTRDRKYGRAKLEEQEFILIDTGGIDGTEQGVETKMAEQSLAAIEEADVVLFMVDGRAGLTSADEAIAKHLRSREKPTFLVVNKIDGIDADAASAEFWQLGMNKVYQIAASHGRGVTSLLELALAPFMEELVEESLKDENGEITDLTEFEDFEDEEKDLTEEDAEKDFARLQDQPIKLAIIGRPNVGKSTLTNRILGEERVVVYDMPGTTRDSIYIPMEREGQEYVLIDTAGVRRRGRINETVEKFSVIKTLKAVEDANVVLLVIDARENISDQDLSLLGFALNAGRSLVIAVNKWDGLDNDVKEKVKSELDRRLGFVDFARIHFISALHGTGVGHLYESVQEAYVSATKRVGTSVLTRIMKMAQDDHQPPLVRGRRVKLKYAHAGGYNPPLIVIHGNQVKELPSSYKRFLMNYYRKSLEIMGTPIRIQFQNSENPFEDRGGKLTMSQERQRKRLLGAVKNRNKK.

2 EngA-type G domains span residues 3 to 166 (PVVA…MEEL) and 211 to 384 (IKLA…VSAT). Residues 9 to 16 (GRPNVGKS), 56 to 60 (DTGGI), 118 to 121 (NKID), 217 to 224 (GRPNVGKS), 264 to 268 (DTAGV), and 329 to 332 (NKWD) each bind GTP. One can recognise a KH-like domain in the interval 385-469 (KRVGTSVLTR…PIRIQFQNSE (85 aa)). The tract at residues 468–500 (SENPFEDRGGKLTMSQERQRKRLLGAVKNRNKK) is disordered. Positions 486-500 (QRKRLLGAVKNRNKK) are enriched in basic residues.

Belongs to the TRAFAC class TrmE-Era-EngA-EngB-Septin-like GTPase superfamily. EngA (Der) GTPase family. As to quaternary structure, associates with the 50S ribosomal subunit.

GTPase that plays an essential role in the late steps of ribosome biogenesis. The polypeptide is GTPase Der (Aliivibrio fischeri (strain ATCC 700601 / ES114) (Vibrio fischeri)).